The sequence spans 66 residues: MVKVKFKYKGEEKEVDTSKIKKVWRVGKMVSFTYDDNGKTGRGAVSEKDAPKELLDMLARAEREKK.

2 positions are modified to N6-methyllysine; partial: Lys5 and Lys7.

It belongs to the 7 kDa DNA-binding/endoribonuclease P2 family. Monomer. Post-translationally, lys-5 was 70% monomethylated in form 7a, 25% in form 7b, and 20% in form 7d. Lys-7 was 50% monomethylated in form 7a, 40% in form 7b, and 50% in form 7d.

Its subcellular location is the cytoplasm. Its function is as follows. Can constrain negative DNA supercoils. May be involved in maintaining the integrity of the genome at high temperature. This chain is DNA-binding protein 7d, found in Sulfolobus acidocaldarius (strain ATCC 33909 / DSM 639 / JCM 8929 / NBRC 15157 / NCIMB 11770).